The following is a 1741-amino-acid chain: Meiosis regulator and mRNA stability factor 1 (1741 aa).

One can recognise an NYN domain in the interval 345–482; sequence IGVFWDIENC…ALLHHAHELV (138 aa). 3 disordered regions span residues 594-636, 659-678, and 683-716; these read KVKS…GSVI, TENHQEHLREIPSQNNSHAA, and LTTKKSGVGESSCKSSYKKETSVSRSMTNSPVDK. Over residues 659 to 668 the composition is skewed to basic and acidic residues; sequence TENHQEHLRE. The region spanning 788 to 867 is the RRM domain; it reads ADIQISNIDY…KRIQVSLATG (80 aa). 8 HTH OST-type domains span residues 872–946, 1000–1076, 1097–1171, 1173–1248, 1257–1332, 1333–1408, 1409–1483, and 1484–1558; these read SLSL…SPLG, SLKT…HNKP, QLIQ…LTHR, QVKR…IPKR, RTKQ…TEVE, QVKA…INRK, SLRT…VRLT, and NLYM…LKND. The span at 1684 to 1700 shows a compositional bias: polar residues; it reads KLTSGSVASSTAENTSV. Residues 1684 to 1727 form a disordered region; the sequence is KLTSGSVASSTAENTSVPPRHSSETQLNKEAMDSPAKKQHKNKV.

The protein resides in the peroxisome. In terms of biological role, essential regulator of oogenesis required for female meiotic progression to repress transposable elements and preventing their mobilization, which is essential for the germline integrity. The sequence is that of Meiosis regulator and mRNA stability factor 1 from Gallus gallus (Chicken).